Here is a 180-residue protein sequence, read N- to C-terminus: Ribosome maturation factor RimM (180 aa).

One can recognise a PRC barrel domain in the interval 104 to 177 (PEEFHDHQLV…RVVVDPPGGL (74 aa)).

It belongs to the RimM family. As to quaternary structure, binds ribosomal protein uS19.

The protein resides in the cytoplasm. In terms of biological role, an accessory protein needed during the final step in the assembly of 30S ribosomal subunit, possibly for assembly of the head region. Essential for efficient processing of 16S rRNA. May be needed both before and after RbfA during the maturation of 16S rRNA. It has affinity for free ribosomal 30S subunits but not for 70S ribosomes. The sequence is that of Ribosome maturation factor RimM from Salinispora tropica (strain ATCC BAA-916 / DSM 44818 / JCM 13857 / NBRC 105044 / CNB-440).